The chain runs to 282 residues: 4-diphosphocytidyl-2-C-methyl-D-erythritol kinase (282 aa).

K13 is an active-site residue. Residue 96–106 coordinates ATP; sequence PMGGGIGGGSS. Residue D138 is part of the active site.

The protein belongs to the GHMP kinase family. IspE subfamily.

It catalyses the reaction 4-CDP-2-C-methyl-D-erythritol + ATP = 4-CDP-2-C-methyl-D-erythritol 2-phosphate + ADP + H(+). The protein operates within isoprenoid biosynthesis; isopentenyl diphosphate biosynthesis via DXP pathway; isopentenyl diphosphate from 1-deoxy-D-xylulose 5-phosphate: step 3/6. Its function is as follows. Catalyzes the phosphorylation of the position 2 hydroxy group of 4-diphosphocytidyl-2C-methyl-D-erythritol. In Pseudomonas syringae pv. tomato (strain ATCC BAA-871 / DC3000), this protein is 4-diphosphocytidyl-2-C-methyl-D-erythritol kinase.